The primary structure comprises 228 residues: Urease accessory protein UreE (228 aa).

The interval 193–228 (HGSGLHIHGIHSHGDGHSHSHDDHDHDHNHDHDHKH) is disordered. Residues 204–228 (SHGDGHSHSHDDHDHDHNHDHDHKH) are compositionally biased toward basic and acidic residues.

This sequence belongs to the UreE family.

It localises to the cytoplasm. Functionally, involved in urease metallocenter assembly. Binds nickel. Probably functions as a nickel donor during metallocenter assembly. The sequence is that of Urease accessory protein UreE from Yersinia rohdei.